Reading from the N-terminus, the 109-residue chain is Iron-sulfur cluster assembly protein CyaY (109 aa).

Belongs to the frataxin family.

Its function is as follows. Involved in iron-sulfur (Fe-S) cluster assembly. May act as a regulator of Fe-S biogenesis. In Shewanella baltica (strain OS155 / ATCC BAA-1091), this protein is Iron-sulfur cluster assembly protein CyaY.